The following is a 557-amino-acid chain: Formate--tetrahydrofolate ligase (557 aa).

An ATP-binding site is contributed by 65–72; that stretch reads TPAGEGKT.

It belongs to the formate--tetrahydrofolate ligase family.

The enzyme catalyses (6S)-5,6,7,8-tetrahydrofolate + formate + ATP = (6R)-10-formyltetrahydrofolate + ADP + phosphate. It participates in one-carbon metabolism; tetrahydrofolate interconversion. The protein is Formate--tetrahydrofolate ligase of Methylorubrum extorquens (strain CM4 / NCIMB 13688) (Methylobacterium extorquens).